A 284-amino-acid polypeptide reads, in one-letter code: Putative xyloglucan endotransglucosylase/hydrolase protein 13 (284 aa).

The N-terminal stretch at 1–24 is a signal peptide; sequence MAAFTTKQSLLLLSLLLLISLSAG. In terms of domain architecture, GH16 spans 25-214; that stretch reads SFYDNFDITW…WTNAPFSASY (190 aa). The Nucleophile role is filled by Glu-100. The active-site Proton donor is the Glu-104. Glu-104 is a xyloglucan binding site. N-linked (GlcNAc...) asparagine glycosylation occurs at Asn-108. Xyloglucan is bound by residues 117–119, 127–129, 193–194, and Gly-198; these read HTN, NRE, and DW. 2 disulfide bridges follow: Cys-223–Cys-234 and Cys-267–Cys-281. Arg-272 contributes to the xyloglucan binding site.

Belongs to the glycosyl hydrolase 16 family. XTH group 2 subfamily. Contains at least one intrachain disulfide bond essential for its enzymatic activity.

It localises to the secreted. The protein localises to the cell wall. It is found in the extracellular space. The protein resides in the apoplast. It catalyses the reaction breaks a beta-(1-&gt;4) bond in the backbone of a xyloglucan and transfers the xyloglucanyl segment on to O-4 of the non-reducing terminal glucose residue of an acceptor, which can be a xyloglucan or an oligosaccharide of xyloglucan.. May catalyze xyloglucan endohydrolysis (XEH) and/or endotransglycosylation (XET). Cleaves and religates xyloglucan polymers, an essential constituent of the primary cell wall, and thereby participates in cell wall construction of growing tissues. The polypeptide is Putative xyloglucan endotransglucosylase/hydrolase protein 13 (XTH13) (Arabidopsis thaliana (Mouse-ear cress)).